Here is a 919-residue protein sequence, read N- to C-terminus: UPF0182 protein Tery_4385 (919 aa).

7 helical membrane-spanning segments follow: residues 6–26 (YIII…RTLV), 52–72 (IFLW…NYWI), 96–116 (IFVK…AATA), 160–180 (WLFT…ALKG), 198–218 (THIS…FWFE), 243–263 (FAYW…VLSV), and 268–288 (IIWP…FNVL).

The protein belongs to the UPF0182 family.

Its subcellular location is the cell membrane. This is UPF0182 protein Tery_4385 from Trichodesmium erythraeum (strain IMS101).